The chain runs to 360 residues: Small ribosomal subunit protein mS22 (360 aa).

Serine 54 is subject to Phosphoserine. The residue at position 211 (lysine 211) is an N6-acetyllysine.

It belongs to the mitochondrion-specific ribosomal protein mS22 family. In terms of assembly, component of the mitochondrial small ribosomal subunit (mt-SSU). Mature mammalian 55S mitochondrial ribosomes consist of a small (28S) and a large (39S) subunit. The 28S small subunit contains a 12S ribosomal RNA (12S mt-rRNA) and 30 different proteins. The 39S large subunit contains a 16S rRNA (16S mt-rRNA), a copy of mitochondrial valine transfer RNA (mt-tRNA(Val)), which plays an integral structural role, and 52 different proteins.

Its subcellular location is the mitochondrion. This is Small ribosomal subunit protein mS22 (MRPS22) from Homo sapiens (Human).